Consider the following 307-residue polypeptide: Ornithine carbamoyltransferase (307 aa).

Residues 56–59 (STRT), Gln83, Arg107, and 134–137 (HPCQ) contribute to the carbamoyl phosphate site. L-ornithine is bound by residues Asn165, Asp223, and 227-228 (SM). Carbamoyl phosphate-binding positions include 263 to 264 (CL) and Arg291.

The protein belongs to the aspartate/ornithine carbamoyltransferase superfamily. OTCase family.

The protein resides in the cytoplasm. It catalyses the reaction carbamoyl phosphate + L-ornithine = L-citrulline + phosphate + H(+). It functions in the pathway amino-acid biosynthesis; L-arginine biosynthesis; L-arginine from L-ornithine and carbamoyl phosphate: step 1/3. Its function is as follows. Reversibly catalyzes the transfer of the carbamoyl group from carbamoyl phosphate (CP) to the N(epsilon) atom of ornithine (ORN) to produce L-citrulline. The polypeptide is Ornithine carbamoyltransferase (Cupriavidus metallidurans (strain ATCC 43123 / DSM 2839 / NBRC 102507 / CH34) (Ralstonia metallidurans)).